An 87-amino-acid chain; its full sequence is Protein Tat (87 aa).

The segment at 1–21 (MDPVDPNLEPWNHPGSQPRTP) is disordered. Residues 1 to 24 (MDPVDPNLEPWNHPGSQPRTPCNK) form an interaction with human CREBBP region. A transactivation region spans residues 1–48 (MDPVDPNLEPWNHPGSQPRTPCNKCYCKKCCYHCQMCFITKGLGISYG). Residues cysteine 22, cysteine 25, and cysteine 27 each contribute to the Zn(2+) site. The segment at 22-37 (CNKCYCKKCCYHCQMC) is cysteine-rich. Lysine 28 is modified (N6-acetyllysine; by host PCAF). Residues cysteine 30, histidine 33, cysteine 34, and cysteine 37 each coordinate Zn(2+). The tract at residues 38-48 (FITKGLGISYG) is core. Residues 45 to 87 (ISYGRKKRRQRRRPPQGNQAHQDPLPEQPSSQHRGDHPTGPKE) are disordered. Residues 48 to 58 (GRKKRRQRRRP) show a composition bias toward basic residues. The Nuclear localization signal, RNA-binding (TAR), and protein transduction motif lies at 49–57 (RKKRRQRRR). The interaction with the host capping enzyme RNGTT stretch occupies residues 49-87 (RKKRRQRRRPPQGNQAHQDPLPEQPSSQHRGDHPTGPKE). N6-acetyllysine; by host EP300 and GCN5L2 is present on residues lysine 50 and lysine 51. 2 positions are modified to asymmetric dimethylarginine; by host PRMT6: arginine 52 and arginine 53. The segment covering 77–87 (HRGDHPTGPKE) has biased composition (basic and acidic residues). The Cell attachment site signature appears at 78 to 80 (RGD).

The protein belongs to the lentiviruses Tat family. In terms of assembly, interacts with host CCNT1. Associates with the P-TEFb complex composed at least of Tat, P-TEFb (CDK9 and CCNT1), TAR RNA, RNA Pol II. Recruits the HATs CREBBP, TAF1/TFIID, EP300, PCAF and GCN5L2. Interacts with host KAT5/Tip60; this interaction targets the latter to degradation. Interacts with the host deacetylase SIRT1. Interacts with host capping enzyme RNGTT; this interaction stimulates RNGTT. Binds to host KDR, and to the host integrins ITGAV/ITGB3 and ITGA5/ITGB1. Interacts with host KPNB1/importin beta-1 without previous binding to KPNA1/importin alpha-1. Interacts with EIF2AK2. Interacts with host nucleosome assembly protein NAP1L1; this interaction may be required for the transport of Tat within the nucleus, since the two proteins interact at the nuclear rim. Interacts with host C1QBP/SF2P32; this interaction involves lysine-acetylated Tat. Interacts with the host chemokine receptors CCR2, CCR3 and CXCR4. Interacts with host DPP4/CD26; this interaction may trigger an anti-proliferative effect. Interacts with host LDLR. Interacts with the host extracellular matrix metalloproteinase MMP1. Interacts with host PRMT6; this interaction mediates Tat's methylation. Interacts with, and is ubiquitinated by MDM2/Hdm2. Interacts with host PSMC3 and HTATIP2. Interacts with STAB1; this interaction may overcome SATB1-mediated repression of IL2 and IL2RA (interleukin) in T cells by binding to the same domain than HDAC1. Interacts (when acetylated) with human CDK13, thereby increasing HIV-1 mRNA splicing and promoting the production of the doubly spliced HIV-1 protein Nef. Interacts with host TBP; this interaction modulates the activity of transcriptional pre-initiation complex. Interacts with host RELA. Interacts with host PLSCR1; this interaction negatively regulates Tat transactivation activity by altering its subcellular distribution. Post-translationally, asymmetrical arginine methylation by host PRMT6 seems to diminish the transactivation capacity of Tat and affects the interaction with host CCNT1. Acetylation by EP300, CREBBP, GCN5L2/GCN5 and PCAF regulates the transactivation activity of Tat. EP300-mediated acetylation of Lys-50 promotes dissociation of Tat from the TAR RNA through the competitive binding to PCAF's bromodomain. In addition, the non-acetylated Tat's N-terminus can also interact with PCAF. PCAF-mediated acetylation of Lys-28 enhances Tat's binding to CCNT1. Lys-50 is deacetylated by SIRT1. In terms of processing, polyubiquitination by host MDM2 does not target Tat to degradation, but activates its transactivation function and fosters interaction with CCNT1 and TAR RNA. Post-translationally, phosphorylated by EIF2AK2 on serine and threonine residues adjacent to the basic region important for TAR RNA binding and function. Phosphorylation of Tat by EIF2AK2 is dependent on the prior activation of EIF2AK2 by dsRNA.

The protein localises to the host nucleus. Its subcellular location is the host nucleolus. It localises to the host cytoplasm. The protein resides in the secreted. In terms of biological role, transcriptional activator that increases RNA Pol II processivity, thereby increasing the level of full-length viral transcripts. Recognizes a hairpin structure at the 5'-LTR of the nascent viral mRNAs referred to as the transactivation responsive RNA element (TAR) and recruits the cyclin T1-CDK9 complex (P-TEFb complex) that will in turn hyperphosphorylate the RNA polymerase II to allow efficient elongation. The CDK9 component of P-TEFb and other Tat-activated kinases hyperphosphorylate the C-terminus of RNA Pol II that becomes stabilized and much more processive. Other factors such as HTATSF1/Tat-SF1, SUPT5H/SPT5, and HTATIP2 are also important for Tat's function. Besides its effect on RNA Pol II processivity, Tat induces chromatin remodeling of proviral genes by recruiting the histone acetyltransferases (HATs) CREBBP, EP300 and PCAF to the chromatin. This also contributes to the increase in proviral transcription rate, especially when the provirus integrates in transcriptionally silent region of the host genome. To ensure maximal activation of the LTR, Tat mediates nuclear translocation of NF-kappa-B by interacting with host RELA. Through its interaction with host TBP, Tat may also modulate transcription initiation. Tat can reactivate a latently infected cell by penetrating in it and transactivating its LTR promoter. In the cytoplasm, Tat is thought to act as a translational activator of HIV-1 mRNAs. Its function is as follows. Extracellular circulating Tat can be endocytosed by surrounding uninfected cells via the binding to several surface receptors such as CD26, CXCR4, heparan sulfate proteoglycans (HSPG) or LDLR. Neurons are rarely infected, but they internalize Tat via their LDLR. Through its interaction with nuclear HATs, Tat is potentially able to control the acetylation-dependent cellular gene expression. Modulates the expression of many cellular genes involved in cell survival, proliferation or in coding for cytokines or cytokine receptors. Tat plays a role in T-cell and neurons apoptosis. Tat induced neurotoxicity and apoptosis probably contribute to neuroAIDS. Circulating Tat also acts as a chemokine-like and/or growth factor-like molecule that binds to specific receptors on the surface of the cells, affecting many cellular pathways. In the vascular system, Tat binds to ITGAV/ITGB3 and ITGA5/ITGB1 integrins dimers at the surface of endothelial cells and competes with bFGF for heparin-binding sites, leading to an excess of soluble bFGF. This is Protein Tat from Homo sapiens (Human).